The following is a 189-amino-acid chain: Translation machinery-associated protein 22 (189 aa).

Residues 94-165 (VTIKRIERNK…EAKDYIEKLL (72 aa)) form the SUI1 domain.

The protein belongs to the DENR family. In terms of assembly, interacts with the 40S ribosomal subunit.

It is found in the cytoplasm. This Debaryomyces hansenii (strain ATCC 36239 / CBS 767 / BCRC 21394 / JCM 1990 / NBRC 0083 / IGC 2968) (Yeast) protein is Translation machinery-associated protein 22 (TMA22).